Reading from the N-terminus, the 360-residue chain is Capsular polysaccharide phosphotransferase LcbA (360 aa).

Belongs to the stealth family.

Part of a group II capsule biosynthesis locus. The protein is Capsular polysaccharide phosphotransferase LcbA (lcbA) of Aeromonas hydrophila.